The following is a 201-amino-acid chain: uncharacterized protein (201 aa).

A run of 4 helical transmembrane segments spans residues 9–29, 42–62, 86–106, and 126–146; these read YNVFLANLVLVFGFALNILVA, FLFVTPFLGVVIGAVLYFFDV, SGVIVFFLNVLIGVVLLVVMV, and LPYLWSTTGTSIVLSLISIGM. Basic and acidic residues-rich tracts occupy residues 165 to 174 and 182 to 191; these read EPTDPNKTDN and DENKKNEKEQ. The tract at residues 165 to 201 is disordered; sequence EPTDPNKTDNRAVVINLDENKKNEKEQSPPSAEMTSL. The span at 192-201 shows a compositional bias: polar residues; that stretch reads SPPSAEMTSL.

It is found in the cell membrane. This is an uncharacterized protein from Mycoplasma genitalium (strain ATCC 33530 / DSM 19775 / NCTC 10195 / G37) (Mycoplasmoides genitalium).